Here is a 97-residue protein sequence, read N- to C-terminus: Small cell adhesion glycoprotein (97 aa).

The Extracellular portion of the chain corresponds to 1–36; it reads MNNLPATPSPEELMTTPVFQAPETLSPQAEEASTAL. The O-linked (GalNAc...) threonine glycan is linked to Thr-7. Residue Ser-9 is glycosylated (O-linked (GalNAc...) serine). 3 O-linked (GalNAc...) threonine glycosylation sites follow: Thr-15, Thr-16, and Thr-24. Residue Ser-26 is glycosylated (O-linked (GalNAc...) serine). A helical; Signal-anchor for type III membrane protein membrane pass occupies residues 37 to 57; the sequence is IAVVITVVFLTLLSVVTLIFF. Over 58–97 the chain is Cytoplasmic; the sequence is HLYKNKGSYVTYEPAEGEPSAILQMETDSAKGREKEEYFI.

This sequence belongs to the SMAGP family. O-glycosylated. The O-glycan is modified with sialic acid residues.

It is found in the cell membrane. It localises to the cytoplasmic vesicle membrane. Functionally, may play a role in epithelial cell-cell contacts. May play a role in tumor invasiveness and metastasis formation. The sequence is that of Small cell adhesion glycoprotein (Smagp) from Mus musculus (Mouse).